The sequence spans 69 residues: Large ribosomal subunit protein uL29 (69 aa).

Belongs to the universal ribosomal protein uL29 family.

This chain is Large ribosomal subunit protein uL29, found in Sulfolobus acidocaldarius (strain ATCC 33909 / DSM 639 / JCM 8929 / NBRC 15157 / NCIMB 11770).